Consider the following 158-residue polypeptide: UPF0260 protein RHECIAT_CH0001358 (158 aa).

It belongs to the UPF0260 family.

The polypeptide is UPF0260 protein RHECIAT_CH0001358 (Rhizobium etli (strain CIAT 652)).